The following is a 206-amino-acid chain: MIGRLRGNLLEKQPPELLIEVSGIGYEVQMPMSCFYELPPIGTEAIIYIHYVVREDAQLLYGFNTKKERALFREVIKANGVGPKLGLAILSGMTASQFVQSVEREDISTLVKLPGVGKKTAERLVVEMKDRLKGWGAGDLFTPADTTSMDDASDLISSPQSAQDEAVSALISLGYKPVQASKMVSQVAKPDMTSESLIRESLKSMI.

The interval 1–64 (MIGRLRGNLL…EDAQLLYGFN (64 aa)) is domain I. The segment at 65–143 (TKKERALFRE…GWGAGDLFTP (79 aa)) is domain II. The tract at residues 144–157 (ADTTSMDDASDLIS) is flexible linker. The domain III stretch occupies residues 158–206 (SPQSAQDEAVSALISLGYKPVQASKMVSQVAKPDMTSESLIRESLKSMI).

Belongs to the RuvA family. Homotetramer. Forms an RuvA(8)-RuvB(12)-Holliday junction (HJ) complex. HJ DNA is sandwiched between 2 RuvA tetramers; dsDNA enters through RuvA and exits via RuvB. An RuvB hexamer assembles on each DNA strand where it exits the tetramer. Each RuvB hexamer is contacted by two RuvA subunits (via domain III) on 2 adjacent RuvB subunits; this complex drives branch migration. In the full resolvosome a probable DNA-RuvA(4)-RuvB(12)-RuvC(2) complex forms which resolves the HJ.

Its subcellular location is the cytoplasm. Functionally, the RuvA-RuvB-RuvC complex processes Holliday junction (HJ) DNA during genetic recombination and DNA repair, while the RuvA-RuvB complex plays an important role in the rescue of blocked DNA replication forks via replication fork reversal (RFR). RuvA specifically binds to HJ cruciform DNA, conferring on it an open structure. The RuvB hexamer acts as an ATP-dependent pump, pulling dsDNA into and through the RuvAB complex. HJ branch migration allows RuvC to scan DNA until it finds its consensus sequence, where it cleaves and resolves the cruciform DNA. In Aliivibrio salmonicida (strain LFI1238) (Vibrio salmonicida (strain LFI1238)), this protein is Holliday junction branch migration complex subunit RuvA.